Consider the following 228-residue polypeptide: Endo-1,4-beta-xylanase B (228 aa).

The N-terminal stretch at 1-19 (MVSFTYLLAAVSAVTGAVA) is a signal peptide. Residues 37–227 (KRTSPTTGVN…SSGQATMTVS (191 aa)) enclose the GH11 domain. The active-site Nucleophile is glutamate 122. The active-site Proton donor is the glutamate 214.

It belongs to the glycosyl hydrolase 11 (cellulase G) family.

It localises to the secreted. It catalyses the reaction Endohydrolysis of (1-&gt;4)-beta-D-xylosidic linkages in xylans.. The protein operates within glycan degradation; xylan degradation. Inhibited by the proteinaceous endoxylanase inhibitor I from T.aestivum (TAXI-I). In terms of biological role, endo-1,4-beta-xylanase involved in the hydrolysis of xylan, a major structural heterogeneous polysaccharide found in plant biomass representing the second most abundant polysaccharide in the biosphere, after cellulose. Plays an important role in causing fusarium head blight (FHB) on cereal crops. Induces cell death and hydrogen peroxide accumulation in infected wheat leaves. The sequence is that of Endo-1,4-beta-xylanase B (XYLB) from Gibberella zeae (strain ATCC MYA-4620 / CBS 123657 / FGSC 9075 / NRRL 31084 / PH-1) (Wheat head blight fungus).